Consider the following 381-residue polypeptide: Dynactin subunit 2 (381 aa).

Residues 15–39 form a disordered region; the sequence is DQPDVYETPDAPESETSDFYDEEPA. The segment covering 24-39 has biased composition (acidic residues); that stretch reads DAPESETSDFYDEEPA. Coiled coils occupy residues 100–216 and 350–381; these read QKCL…AVGA and GVQEAFAQNLENVNKEVKKLDERMKTLQEKVK.

The protein belongs to the dynactin subunit 2 family. Subunit of dynactin, a multiprotein complex associated with dynein.

The protein resides in the cytoplasm. It is found in the cytoskeleton. Its subcellular location is the membrane. Modulates cytoplasmic dynein binding to an organelle, and plays a role in prometaphase chromosome alignment and spindle organization during mitosis. This Aedes aegypti (Yellowfever mosquito) protein is Dynactin subunit 2.